The following is a 222-amino-acid chain: 3-dehydroquinate dehydratase (222 aa).

3-dehydroquinate-binding positions include 32–34 (ELR) and Arg-64. His-117 acts as the Proton donor/acceptor in catalysis. The Schiff-base intermediate with substrate role is filled by Lys-143. Arg-181 provides a ligand contact to 3-dehydroquinate.

It belongs to the type-I 3-dehydroquinase family. Homodimer.

The catalysed reaction is 3-dehydroquinate = 3-dehydroshikimate + H2O. It participates in metabolic intermediate biosynthesis; chorismate biosynthesis; chorismate from D-erythrose 4-phosphate and phosphoenolpyruvate: step 3/7. In terms of biological role, involved in the third step of the chorismate pathway, which leads to the biosynthesis of aromatic amino acids. Catalyzes the cis-dehydration of 3-dehydroquinate (DHQ) and introduces the first double bond of the aromatic ring to yield 3-dehydroshikimate. The sequence is that of 3-dehydroquinate dehydratase from Aeropyrum pernix (strain ATCC 700893 / DSM 11879 / JCM 9820 / NBRC 100138 / K1).